Here is a 132-residue protein sequence, read N- to C-terminus: Agouti-signaling protein (132 aa).

Positions 1-22 (MDVTRLLLATLLVFLCFFTAYS) are cleaved as a signal peptide. Asparagine 39 carries an N-linked (GlcNAc...) asparagine glycan. The segment at 58–88 (KSKQMSRKEAEKKRSSKKEASMKKVARPRTP) is disordered. Positions 63 to 79 (SRKEAEKKRSSKKEASM) are enriched in basic and acidic residues. Intrachain disulfides connect cysteine 93–cysteine 108, cysteine 100–cysteine 114, cysteine 107–cysteine 125, cysteine 111–cysteine 132, and cysteine 116–cysteine 123. Positions 93-132 (CVATRDSCKPPAPACCDPCASCQCRFFRSACSCRVLSLNC) constitute an Agouti domain.

The protein resides in the secreted. Functionally, involved in the regulation of melanogenesis. The binding of ASP to MC1R precludes alpha-MSH initiated signaling and thus blocks production of cAMP, leading to a down-regulation of eumelanogenesis (brown/black pigment) and thus increasing synthesis of pheomelanin (yellow/red pigment). The sequence is that of Agouti-signaling protein (ASIP) from Cercopithecus mitis (Blue monkey).